A 156-amino-acid polypeptide reads, in one-letter code: Small ribosomal subunit protein uS7 (156 aa).

Belongs to the universal ribosomal protein uS7 family. In terms of assembly, part of the 30S ribosomal subunit. Contacts proteins S9 and S11.

In terms of biological role, one of the primary rRNA binding proteins, it binds directly to 16S rRNA where it nucleates assembly of the head domain of the 30S subunit. Is located at the subunit interface close to the decoding center, probably blocks exit of the E-site tRNA. This Ruminiclostridium cellulolyticum (strain ATCC 35319 / DSM 5812 / JCM 6584 / H10) (Clostridium cellulolyticum) protein is Small ribosomal subunit protein uS7.